The sequence spans 466 residues: Proline--tRNA ligase (466 aa).

Belongs to the class-II aminoacyl-tRNA synthetase family. ProS type 3 subfamily. In terms of assembly, homodimer.

Its subcellular location is the cytoplasm. It carries out the reaction tRNA(Pro) + L-proline + ATP = L-prolyl-tRNA(Pro) + AMP + diphosphate. Its function is as follows. Catalyzes the attachment of proline to tRNA(Pro) in a two-step reaction: proline is first activated by ATP to form Pro-AMP and then transferred to the acceptor end of tRNA(Pro). The chain is Proline--tRNA ligase from Picrophilus torridus (strain ATCC 700027 / DSM 9790 / JCM 10055 / NBRC 100828 / KAW 2/3).